A 472-amino-acid chain; its full sequence is Chitobiosyldiphosphodolichol beta-mannosyltransferase (472 aa).

Over 1–20 (MEEFQFIKYKGFDHVFKYSG) the chain is Lumenal. A helical membrane pass occupies residues 21-41 (PWLWWLVGFYLCLPILAYTLL). The Cytoplasmic portion of the chain corresponds to 42–118 (PYLTMNGTIS…PITVTKNTSN (77 aa)). The helical intramembrane region spans 119 to 139 (LPFILFAAKKMVVQFFQLLKL). Over 140 to 472 (LSDFRGTDYV…MGKRFEYSTD (333 aa)) the chain is Cytoplasmic.

This sequence belongs to the glycosyltransferase group 1 family.

Its subcellular location is the endoplasmic reticulum membrane. It catalyses the reaction an N,N'-diacetylchitobiosyl-diphospho-di-trans,poly-cis-dolichol + GDP-alpha-D-mannose = a beta-D-Man-(1-&gt;4)-beta-D-GlcNAc-(1-&gt;4)-alpha-D-GlcNAc-diphospho-di-trans,poly-cis-dolichol + GDP + H(+). The protein operates within protein modification; protein glycosylation. Its function is as follows. Participates in the formation of the lipid-linked precursor oligosaccharide for N-glycosylation. Involved in assembling the dolichol-pyrophosphate-GlcNAc(2)-Man(5) intermediate on the cytoplasmic surface of the ER. This is Chitobiosyldiphosphodolichol beta-mannosyltransferase (ALG1) from Debaryomyces hansenii (strain ATCC 36239 / CBS 767 / BCRC 21394 / JCM 1990 / NBRC 0083 / IGC 2968) (Yeast).